The chain runs to 467 residues: Asparagine--tRNA ligase (467 aa).

The protein belongs to the class-II aminoacyl-tRNA synthetase family. In terms of assembly, homodimer.

It is found in the cytoplasm. It catalyses the reaction tRNA(Asn) + L-asparagine + ATP = L-asparaginyl-tRNA(Asn) + AMP + diphosphate + H(+). This Haemophilus influenzae (strain PittEE) protein is Asparagine--tRNA ligase.